A 310-amino-acid polypeptide reads, in one-letter code: Putative S-adenosyl-L-methionine-dependent methyltransferase MAB_4587c (310 aa).

S-adenosyl-L-methionine-binding positions include D126 and 155–156 (DL).

This sequence belongs to the UPF0677 family.

In terms of biological role, exhibits S-adenosyl-L-methionine-dependent methyltransferase activity. The sequence is that of Putative S-adenosyl-L-methionine-dependent methyltransferase MAB_4587c from Mycobacteroides abscessus (strain ATCC 19977 / DSM 44196 / CCUG 20993 / CIP 104536 / JCM 13569 / NCTC 13031 / TMC 1543 / L948) (Mycobacterium abscessus).